The sequence spans 69 residues: Toxin Lc a (69 aa).

Disulfide bonds link C3-C20, C13-C41, C45-C56, and C57-C62.

Belongs to the three-finger toxin family. Long-chain subfamily. Type II alpha-neurotoxin sub-subfamily. Expressed by the venom gland.

The protein localises to the secreted. Its function is as follows. Binds with high affinity to muscular nicotinic acetylcholine receptors (nAChRs), whereas it binds with a low affinity to neuronal alpha-7/CHRNA7 nAChRs. This Laticauda colubrina (Yellow-lipped sea krait) protein is Toxin Lc a.